We begin with the raw amino-acid sequence, 37 residues long: Albumin-2 (37 aa).

Residues 6 to 37 form a Hemopexin repeat; the sequence is IANFSVLNXEAYLFINDKYVLLDYAPGTXNDK.

In terms of assembly, dimer. In terms of tissue distribution, expressed in seeds (at protein level).

The protein localises to the cytoplasm. It is found in the cytosol. Binds hemin and thiamine. This Lens culinaris (Lentil) protein is Albumin-2.